Here is a 381-residue protein sequence, read N- to C-terminus: MTAPLNPSAPITVEVALGDRGYDIVIGRGGIESLGRRITALRPGARTAIVTDRSVAKHWLPRAQASLDETGIAHSTIVVEEGEVSKSYAGLQQVCEALIEAKIERNDLVIALGGGVVGDLAGFASSIVRRGLDFVQVPTSLLAQVDSSVGGKTGINSPHGKNLVGAFHQPVLVIADTAVLDTLSPRQFRAGYAEVVKYGALGDSGFFAWLEANHAEIVRGGAAREHAIATSCRAKAGVVARDERETGERALLNLGHTFGHALEAATGFSDRLFHGEGVAIGMVLAAEFSAERGMMPAQDATRLSHHLTAAGLPTRMQDIAGFKQEGLADADSLMALMAQDKKVKRGRLTFILMEAIGRAVIANDVEPAPVRDFLHRKLAES.

NAD(+) contacts are provided by residues 81 to 86 (EGEVSK), 115 to 119 (GVVGD), 139 to 140 (TS), Lys152, and Lys161. Zn(2+)-binding residues include Glu194, His256, and His274.

It belongs to the sugar phosphate cyclases superfamily. Dehydroquinate synthase family. It depends on Co(2+) as a cofactor. Zn(2+) is required as a cofactor. Requires NAD(+) as cofactor.

Its subcellular location is the cytoplasm. It carries out the reaction 7-phospho-2-dehydro-3-deoxy-D-arabino-heptonate = 3-dehydroquinate + phosphate. It functions in the pathway metabolic intermediate biosynthesis; chorismate biosynthesis; chorismate from D-erythrose 4-phosphate and phosphoenolpyruvate: step 2/7. Catalyzes the conversion of 3-deoxy-D-arabino-heptulosonate 7-phosphate (DAHP) to dehydroquinate (DHQ). This chain is 3-dehydroquinate synthase, found in Rhodopseudomonas palustris (strain BisA53).